Consider the following 181-residue polypeptide: MSFSDQNLIWIDLEMTGLDPDVHKIIEIASIVTDSELNILAEGPVLAIHQSEEELAKMDEWCTNTHTGSGLVERVRGSQITEQEAVEQTIAFLEKWVPKGVSPICGNSIGQDRRFLYRHMPELEGYFHYRYIDVSTLKELTRRWNPEVLKGFSKQGTHLALDDIRESIAELKFYRQTIFKI.

Positions 8–171 (LIWIDLEMTG…DDIRESIAEL (164 aa)) constitute an Exonuclease domain. Residue Tyr129 is part of the active site.

Belongs to the oligoribonuclease family.

It localises to the cytoplasm. 3'-to-5' exoribonuclease specific for small oligoribonucleotides. This Vibrio vulnificus (strain CMCP6) protein is Oligoribonuclease.